A 731-amino-acid chain; its full sequence is Pre-B-cell leukemia transcription factor-interacting protein 1 (731 aa).

A compositionally biased stretch (polar residues) spans 1–10 (MASCPDSDNS). The interval 1–155 (MASCPDSDNS…SSSDDDTDVD (155 aa)) is disordered. Ser-43 is subject to Phosphoserine. Polar residues-rich tracts occupy residues 62–75 (LFQTESPQSGSILT) and 121–132 (LEGQSPPQSLPS). Ser-129, Ser-146, Ser-147, and Ser-148 each carry phosphoserine. A Phosphothreonine modification is found at Thr-152. Residues 270–348 (LLLDKLAKEN…QGLEADCVRG (79 aa)) are a coiled coil. 3 disordered regions span residues 354 to 377 (LSGGRGPQGDKAIREQGPREQEPE), 447 to 572 (GQDP…DPLP), and 698 to 731 (LKKRSGKKDKHSQSPRAAGPREGHSHSHHHHHRG). Basic and acidic residues predominate over residues 364 to 375 (KAIREQGPREQE). The stretch at 377-417 (ELSFLKQKEQLEAEAQALRQELERQRRLLGSVQQDLERSLQ) forms a coiled coil. 3 stretches are compositionally biased toward basic and acidic residues: residues 472–499 (WSGKEKWWDGQRDRKAEHWKHKKEESGR), 508–543 (QEDREPAGRWKEGRPRVEESGSKKEGKRQGPKEPPR), and 551–569 (SGEKQKQPRWREGTKDSHD). A Nuclear localization signal motif is present at residues 485–505 (RKAEHWKHKKEESGRERKKNW). The residue at position 567 (Ser-567) is a Phosphoserine. The Nuclear localization signal signature appears at 695 to 720 (DKALKKRSGKKDKHSQSPRAAGPREG). Positions 698 to 707 (LKKRSGKKDK) are enriched in basic residues.

Interacts with TEX11. Interacts with ESR1, PBX1, PBX2 and PBX3. As to expression, expressed in early hematopoietic precursors.

It localises to the cytoplasm. The protein resides in the cytoskeleton. Its subcellular location is the nucleus. Functionally, regulator of pre-B-cell leukemia transcription factors (BPXs) function. Inhibits the binding of PBX1-HOX complex to DNA and blocks the transcriptional activity of E2A-PBX1. Tethers estrogen receptor-alpha (ESR1) to microtubules and allows them to influence estrogen receptors-alpha signaling. This chain is Pre-B-cell leukemia transcription factor-interacting protein 1 (PBXIP1), found in Homo sapiens (Human).